A 488-amino-acid chain; its full sequence is UDP-N-acetylmuramate--L-alanine ligase (488 aa).

129–135 provides a ligand contact to ATP; that stretch reads GTHGKTT.

This sequence belongs to the MurCDEF family.

The protein resides in the cytoplasm. It catalyses the reaction UDP-N-acetyl-alpha-D-muramate + L-alanine + ATP = UDP-N-acetyl-alpha-D-muramoyl-L-alanine + ADP + phosphate + H(+). Its pathway is cell wall biogenesis; peptidoglycan biosynthesis. Cell wall formation. In Chromohalobacter salexigens (strain ATCC BAA-138 / DSM 3043 / CIP 106854 / NCIMB 13768 / 1H11), this protein is UDP-N-acetylmuramate--L-alanine ligase.